The chain runs to 263 residues: Acyl-[acyl-carrier-protein]--UDP-N-acetylglucosamine O-acyltransferase (263 aa).

It belongs to the transferase hexapeptide repeat family. LpxA subfamily. Homotrimer.

The protein resides in the cytoplasm. It catalyses the reaction a (3R)-hydroxyacyl-[ACP] + UDP-N-acetyl-alpha-D-glucosamine = a UDP-3-O-[(3R)-3-hydroxyacyl]-N-acetyl-alpha-D-glucosamine + holo-[ACP]. It functions in the pathway glycolipid biosynthesis; lipid IV(A) biosynthesis; lipid IV(A) from (3R)-3-hydroxytetradecanoyl-[acyl-carrier-protein] and UDP-N-acetyl-alpha-D-glucosamine: step 1/6. In terms of biological role, involved in the biosynthesis of lipid A, a phosphorylated glycolipid that anchors the lipopolysaccharide to the outer membrane of the cell. The sequence is that of Acyl-[acyl-carrier-protein]--UDP-N-acetylglucosamine O-acyltransferase from Campylobacter jejuni (strain RM1221).